Here is a 266-residue protein sequence, read N- to C-terminus: 4-hydroxy-tetrahydrodipicolinate reductase (266 aa).

Residue 10–15 coordinates NAD(+); that stretch reads GPRGRM. Lys38 is a binding site for NADP(+). NAD(+) is bound by residues 99–101 and 125–128; these read GTT and APNF. His155 serves as the catalytic Proton donor/acceptor. His156 contributes to the (S)-2,3,4,5-tetrahydrodipicolinate binding site. Lys159 acts as the Proton donor in catalysis. Residue 165–166 coordinates (S)-2,3,4,5-tetrahydrodipicolinate; that stretch reads GT.

Belongs to the DapB family.

The protein resides in the cytoplasm. The enzyme catalyses (S)-2,3,4,5-tetrahydrodipicolinate + NAD(+) + H2O = (2S,4S)-4-hydroxy-2,3,4,5-tetrahydrodipicolinate + NADH + H(+). It catalyses the reaction (S)-2,3,4,5-tetrahydrodipicolinate + NADP(+) + H2O = (2S,4S)-4-hydroxy-2,3,4,5-tetrahydrodipicolinate + NADPH + H(+). Its pathway is amino-acid biosynthesis; L-lysine biosynthesis via DAP pathway; (S)-tetrahydrodipicolinate from L-aspartate: step 4/4. In terms of biological role, catalyzes the conversion of 4-hydroxy-tetrahydrodipicolinate (HTPA) to tetrahydrodipicolinate. This chain is 4-hydroxy-tetrahydrodipicolinate reductase, found in Bacillus cereus (strain ATCC 10987 / NRS 248).